Here is a 458-residue protein sequence, read N- to C-terminus: N-acetylgalactosamine kinase (458 aa).

Residues R43, E49, H50, and D52 each contribute to the alpha-D-galactose site. ATP contacts are provided by G143, S145, and S146. An alpha-D-galactose-binding site is contributed by D190. The active-site Proton acceptor is the D190. Positions 233 and 234 each coordinate ATP.

It belongs to the GHMP kinase family. GalK subfamily. As to quaternary structure, monomer.

It catalyses the reaction N-acetyl-alpha-D-galactosamine + ATP = N-acetyl-alpha-D-galactosamine 1-phosphate + ADP + H(+). Functionally, acts on GalNAc. Also acts as a galactokinase when galactose is present at high concentrations. In Mus musculus (Mouse), this protein is N-acetylgalactosamine kinase (Galk2).